The chain runs to 196 residues: Transmembrane 4 L6 family member 5 (196 aa).

Topologically, residues 1–9 are cytoplasmic; the sequence is MCTGKCARF. A helical membrane pass occupies residues 10 to 30; the sequence is VGLSLIPLSLVCIVANALLLV. The Extracellular portion of the chain corresponds to 31–45; the sequence is PNGQTTWTKDHLSLQ. The helical transmembrane segment at 46–66 threads the bilayer; sequence VWLMAGFVGGGLMVLCPGISA. At 67–89 the chain is on the cytoplasmic side; that stretch reads VRAGGKGCCGAGCCGNRCRMLRS. Residues 90 to 110 traverse the membrane as a helical segment; it reads VFCSAIGLLGAIYCLSVSGTG. The segment at 90 to 196 is interaction with MTOR and CASTOR1; sequence VFCSAIGLLG…DCRKKQGSSQ (107 aa). Residues 111 to 156 lie on the Extracellular side of the membrane; sequence LRIGPQCLMNGSWDYHFQDTAGSYLLNRTQWNLCVEPPDVVLWNVT. N120 carries an N-linked (GlcNAc...) asparagine glycan. 123-128 contacts L-arginine; it reads WDYHFQ. N-linked (GlcNAc...) asparagine glycans are attached at residues N137 and N154. The chain crosses the membrane as a helical span at residues 157-177; the sequence is LFSLLVAASCLEILLCGVQLV. Over 178 to 196 the chain is Cytoplasmic; sequence NASIGVLCGDCRKKQGSSQ.

Belongs to the L6 tetraspanin family. As to quaternary structure, interacts with MTOR; the interaction is positively regulated by arginine and is negatively regulated by leucine. Interacts with SLC38A9. Interacts with SLC7A1; the interaction is negatively regulated by arginine. Interacts with CASTOR1; the interaction is positively regulated by leucine and is negatively regulated by arginine.

Its subcellular location is the lysosome membrane. It is found in the cell membrane. Acts as a lysosomal membrane arginine sensor. Forms a complex with MTOR and SLC38A9 on lysosomal membranes in an arginine-regulated manner, leading to arginine efflux which enables the activation of mTORC1 which subsequently leads to RPS6KB1 and EIF4EBP1 phosphorylations. Facilitates cell cycle G1/S phase progression and the translocation of the CDK4-CCND1 complex into the nucleus. CDKN1B and RHOA/ROCK signaling activity are involved in TM4SF5-mediated acceleration of G1/S phase progression. The protein is Transmembrane 4 L6 family member 5 (TM4SF5) of Bos taurus (Bovine).